A 112-amino-acid polypeptide reads, in one-letter code: Nitrogen regulatory protein GlnK2 (112 aa).

Residues threonine 29, 37-39 (GVQ), valine 64, and 87-90 (GDGK) each bind ADP. ATP contacts are provided by residues threonine 29, 37 to 39 (GVQ), valine 64, and 87 to 90 (GDGK).

It belongs to the P(II) protein family. Homotrimer. Interacts and forms a complex with Amt2.

It localises to the cytoplasm. Functionally, involved in the regulation of nitrogen metabolism. Regulates the activity of its targets by protein-protein interaction in response to the nitrogen status of the cell. Regulates the activity of the ammonia channel Amt2 via direct interaction. The chain is Nitrogen regulatory protein GlnK2 from Methanocaldococcus jannaschii (strain ATCC 43067 / DSM 2661 / JAL-1 / JCM 10045 / NBRC 100440) (Methanococcus jannaschii).